Consider the following 375-residue polypeptide: 23S rRNA (uracil(747)-C(5))-methyltransferase RlmC (375 aa).

[4Fe-4S] cluster-binding residues include Cys3, Cys11, Cys14, and Cys87. Positions 212, 241, 262, and 307 each coordinate S-adenosyl-L-methionine. The active-site Nucleophile is the Cys334.

This sequence belongs to the class I-like SAM-binding methyltransferase superfamily. RNA M5U methyltransferase family. RlmC subfamily.

It carries out the reaction uridine(747) in 23S rRNA + S-adenosyl-L-methionine = 5-methyluridine(747) in 23S rRNA + S-adenosyl-L-homocysteine + H(+). Functionally, catalyzes the formation of 5-methyl-uridine at position 747 (m5U747) in 23S rRNA. In Salmonella dublin (strain CT_02021853), this protein is 23S rRNA (uracil(747)-C(5))-methyltransferase RlmC.